Consider the following 344-residue polypeptide: Trace amine-associated receptor 8b (344 aa).

Residues Met1–Arg31 lie on the Extracellular side of the membrane. N-linked (GlcNAc...) asparagine glycosylation is found at Asn4 and Asn18. Cystine bridges form between Cys21–Cys185 and Cys104–Cys189. Residues Val32–Val52 form a helical membrane-spanning segment. At Val53 to Asn67 the chain is on the cytoplasmic side. A helical transmembrane segment spans residues Phe68–Ser88. Topologically, residues Met89–Asp111 are extracellular. Residues Val112–Ala132 traverse the membrane as a helical segment. Topologically, residues Val133 to Ser146 are cytoplasmic. The helical transmembrane segment at Val147–Phe167 threads the bilayer. Topologically, residues Tyr168 to Gln195 are extracellular. Residues Asp196 to Tyr216 form a helical membrane-spanning segment. The Cytoplasmic segment spans residues Ser217–Thr260. The helical transmembrane segment at Leu261 to Val281 threads the bilayer. Asp282 is a topological domain (extracellular). Residues Ala283–Tyr303 form a helical membrane-spanning segment. At Asn304 to Glu344 the chain is on the cytoplasmic side.

The protein belongs to the G-protein coupled receptor 1 family. In terms of tissue distribution, specifically expressed in neurons of the olfactory epithelium.

It localises to the cell membrane. Olfactory receptor specific for trace amines. Trace amine compounds are enriched in animal body fluids and act on trace amine-associated receptors (TAARs) to elicit both intraspecific and interspecific innate behaviors. Ligand-binding causes a conformation change that triggers signaling via G alpha proteins, possibly G(i)/G(o) G alpha proteins. This Mus musculus (Mouse) protein is Trace amine-associated receptor 8b.